The sequence spans 330 residues: Copper-containing nitrite reductase (330 aa).

Plastocyanin-like domains follow at residues 1-165 and 166-330; these read GLPR…YDRV and YTIG…PGPA. 7 residues coordinate Cu cation: H85, H90, H125, C126, H135, M140, and H296.

Belongs to the multicopper oxidase family. As to quaternary structure, homotrimer. Cu(2+) serves as cofactor. Cu(+) is required as a cofactor. The cofactor is FAD.

The protein localises to the periplasm. It catalyses the reaction nitric oxide + Fe(III)-[cytochrome c] + H2O = Fe(II)-[cytochrome c] + nitrite + 2 H(+). It functions in the pathway nitrogen metabolism; nitrate reduction (denitrification); dinitrogen from nitrate: step 2/4. The sequence is that of Copper-containing nitrite reductase (nirK) from Alcaligenes xylosoxydans xylosoxydans (Achromobacter xylosoxidans).